Here is a 249-residue protein sequence, read N- to C-terminus: uncharacterized protein (249 aa).

Residues 30–65 adopt a coiled-coil conformation; it reads KVDKLKKLEIKKLEDQKKLKEQEEKHRLTLIRLANA. Positions 66 to 97 are disordered; the sequence is PPQTNSINNNNNNNNNIKTNRPPLIYGEDKDK.

This is an uncharacterized protein from Dictyostelium discoideum (Social amoeba).